The following is a 403-amino-acid chain: MQIYLVGGAVRDQLLQLPVYDRDWVVVGSSPQAMLAAGFQAVGKDFPVFLHPNSKEEHALARTERKTGVGYTGFACHYAPDVSLEDDLLRRDLTINAMAQDNSGQLIDPYGGQRDLAAKVLRHVSPAFVEDPLRVLRVARFAAKLHHLGFTVAEETMQLMAKIVQSGELQHLTAERVWQEWHKSLSTNHPEVFLQVLRDCGALAVVLPEIDRLFGVPQPEKWHPEIDTGIHTLMVAKQAAQLSDSLPVRFAAQVHDLGKGVTPPSEWPSHKLHCHTGLNIIESLCERIRVPNEFRDLALAVCAQHSNIHRADELKPTTKLKVLGLLDVWRKPERLEQVLLCCEADHRGRLGLENEPYPQREIFLRAYQAALGVAVQAVIADGFHGKQIKEELDKRRVSAIEAL.

Gly8 and Arg11 together coordinate ATP. The CTP site is built by Gly8 and Arg11. Asp21 and Asp23 together coordinate Mg(2+). ATP is bound by residues Arg91, Arg137, and Arg140. CTP-binding residues include Arg91, Arg137, and Arg140. One can recognise an HD domain in the interval 228-329 (TGIHTLMVAK…LKVLGLLDVW (102 aa)).

This sequence belongs to the tRNA nucleotidyltransferase/poly(A) polymerase family. Bacterial CCA-adding enzyme type 1 subfamily. As to quaternary structure, monomer. Can also form homodimers and oligomers. Mg(2+) serves as cofactor. Requires Ni(2+) as cofactor.

The enzyme catalyses a tRNA precursor + 2 CTP + ATP = a tRNA with a 3' CCA end + 3 diphosphate. It catalyses the reaction a tRNA with a 3' CCA end + 2 CTP + ATP = a tRNA with a 3' CCACCA end + 3 diphosphate. Catalyzes the addition and repair of the essential 3'-terminal CCA sequence in tRNAs without using a nucleic acid template. Adds these three nucleotides in the order of C, C, and A to the tRNA nucleotide-73, using CTP and ATP as substrates and producing inorganic pyrophosphate. tRNA 3'-terminal CCA addition is required both for tRNA processing and repair. Also involved in tRNA surveillance by mediating tandem CCA addition to generate a CCACCA at the 3' terminus of unstable tRNAs. While stable tRNAs receive only 3'-terminal CCA, unstable tRNAs are marked with CCACCA and rapidly degraded. This Vibrio cholerae serotype O1 (strain ATCC 39541 / Classical Ogawa 395 / O395) protein is Multifunctional CCA protein.